A 343-amino-acid polypeptide reads, in one-letter code: Serpentine receptor class alpha-11 (343 aa).

Residues 1–24 lie on the Extracellular side of the membrane; sequence MSSPDTPVCASPQQMEMYNSHFYT. A helical membrane pass occupies residues 25-45; sequence CALFFNLLIAFTSMTLIIMAI. The Cytoplasmic segment spans residues 46-60; that stretch reads RKLLTESIINTSTRM. Residues 61–81 traverse the membrane as a helical segment; that stretch reads FLIVGLLCCSLHQTAYIVLRV. Residues 82–106 are Extracellular-facing; the sequence is QVIFQILFKLDQPCKLYYKAYDCKY. A helical membrane pass occupies residues 107 to 127; it reads VTFSLVAGNTGMIFIQSAMTI. Residues 128–146 lie on the Cytoplasmic side of the membrane; that stretch reads DRILTTVFTNLWPKLKYWP. A helical membrane pass occupies residues 147–167; sequence GVILSSFMIGCNFTNVQFIFW. The Extracellular segment spans residues 168–192; the sequence is NDPLTDYVPTCGQFPPKSVGRFQKF. A helical transmembrane segment spans residues 193-213; sequence LEIALYMSLAHMVINVIILYI. Residues 214–247 lie on the Cytoplasmic side of the membrane; it reads NVVQDRRQRLVSTHDQSQSFDVNQRFQSRVALKS. A helical transmembrane segment spans residues 248-268; the sequence is TQAIFFLSMSQFLSCFLYTIF. Topologically, residues 269–291 are extracellular; the sequence is TKLYLTLQPDMTPLQSGLTLALT. The chain crosses the membrane as a helical span at residues 292–312; the sequence is YTTPYACIAIPSLIMVTLTFI. Residues 313 to 343 are Cytoplasmic-facing; that stretch reads RNQRHRSINALRSQTETGDQYMQKIKKIWDK.

Belongs to the nematode receptor-like protein sra family.

The protein resides in the membrane. In terms of biological role, a G protein-coupled receptor required for olfactory imprinting a requisite in ordorant response such as benzaldehyde and isoamylalcohol. This is Serpentine receptor class alpha-11 from Caenorhabditis briggsae.